Reading from the N-terminus, the 111-residue chain is ATP synthase subunit c (111 aa).

Helical transmembrane passes span 38-58 and 89-109; these read GLGV…GSGL and AGIA…LIFV.

The protein belongs to the ATPase C chain family. F-type ATPases have 2 components, F(1) - the catalytic core - and F(0) - the membrane proton channel. F(1) has five subunits: alpha(3), beta(3), gamma(1), delta(1), epsilon(1). F(0) has three main subunits: a(1), b(2) and c(10-14). The alpha and beta chains form an alternating ring which encloses part of the gamma chain. F(1) is attached to F(0) by a central stalk formed by the gamma and epsilon chains, while a peripheral stalk is formed by the delta and b chains.

It is found in the cell membrane. Its function is as follows. F(1)F(0) ATP synthase produces ATP from ADP in the presence of a proton or sodium gradient. F-type ATPases consist of two structural domains, F(1) containing the extramembraneous catalytic core and F(0) containing the membrane proton channel, linked together by a central stalk and a peripheral stalk. During catalysis, ATP synthesis in the catalytic domain of F(1) is coupled via a rotary mechanism of the central stalk subunits to proton translocation. Key component of the F(0) channel; it plays a direct role in translocation across the membrane. A homomeric c-ring of between 10-14 subunits forms the central stalk rotor element with the F(1) delta and epsilon subunits. This chain is ATP synthase subunit c, found in Mycoplasmopsis synoviae (strain 53) (Mycoplasma synoviae).